The sequence spans 296 residues: Undecaprenyl-diphosphatase (296 aa).

7 consecutive transmembrane segments (helical) span residues 48-68, 104-124, 131-151, 167-187, 208-228, 237-257, and 272-292; these read SAFT…AWVF, LTLW…LLFD, LFSV…MIFA, ITFF…WPGF, SDFT…LSLV, SHIP…LLSI, and FAIY…GFGI.

This sequence belongs to the UppP family.

It localises to the cell membrane. It catalyses the reaction di-trans,octa-cis-undecaprenyl diphosphate + H2O = di-trans,octa-cis-undecaprenyl phosphate + phosphate + H(+). Catalyzes the dephosphorylation of undecaprenyl diphosphate (UPP). Confers resistance to bacitracin. The polypeptide is Undecaprenyl-diphosphatase (Staphylococcus carnosus (strain TM300)).